Here is a 133-residue protein sequence, read N- to C-terminus: NADPH-dependent 7-cyano-7-deazaguanine reductase (133 aa).

The active-site Thioimide intermediate is Cys49. Catalysis depends on Asp56, which acts as the Proton donor. Substrate-binding positions include 71–73 (IEL) and 90–91 (HE).

It belongs to the GTP cyclohydrolase I family. QueF type 1 subfamily.

It localises to the cytoplasm. It carries out the reaction 7-aminomethyl-7-carbaguanine + 2 NADP(+) = 7-cyano-7-deazaguanine + 2 NADPH + 3 H(+). The protein operates within tRNA modification; tRNA-queuosine biosynthesis. Its function is as follows. Catalyzes the NADPH-dependent reduction of 7-cyano-7-deazaguanine (preQ0) to 7-aminomethyl-7-deazaguanine (preQ1). The polypeptide is NADPH-dependent 7-cyano-7-deazaguanine reductase (Leptospira borgpetersenii serovar Hardjo-bovis (strain JB197)).